Reading from the N-terminus, the 439-residue chain is tRNA-2-methylthio-N(6)-dimethylallyladenosine synthase (439 aa).

Residues K5–A121 form the MTTase N-terminal domain. Residues C14, C50, C84, C159, C163, and C166 each coordinate [4Fe-4S] cluster. The region spanning A145 to D378 is the Radical SAM core domain. The 62-residue stretch at D378–A439 folds into the TRAM domain.

The protein belongs to the methylthiotransferase family. MiaB subfamily. As to quaternary structure, monomer. [4Fe-4S] cluster serves as cofactor.

Its subcellular location is the cytoplasm. It carries out the reaction N(6)-dimethylallyladenosine(37) in tRNA + (sulfur carrier)-SH + AH2 + 2 S-adenosyl-L-methionine = 2-methylsulfanyl-N(6)-dimethylallyladenosine(37) in tRNA + (sulfur carrier)-H + 5'-deoxyadenosine + L-methionine + A + S-adenosyl-L-homocysteine + 2 H(+). Functionally, catalyzes the methylthiolation of N6-(dimethylallyl)adenosine (i(6)A), leading to the formation of 2-methylthio-N6-(dimethylallyl)adenosine (ms(2)i(6)A) at position 37 in tRNAs that read codons beginning with uridine. The polypeptide is tRNA-2-methylthio-N(6)-dimethylallyladenosine synthase (Ruegeria pomeroyi (strain ATCC 700808 / DSM 15171 / DSS-3) (Silicibacter pomeroyi)).